A 557-amino-acid polypeptide reads, in one-letter code: Formate--tetrahydrofolate ligase (557 aa).

Thr65–Thr72 contacts ATP.

It belongs to the formate--tetrahydrofolate ligase family. Homotetramer.

It catalyses the reaction (6S)-5,6,7,8-tetrahydrofolate + formate + ATP = (6R)-10-formyltetrahydrofolate + ADP + phosphate. It functions in the pathway one-carbon metabolism; tetrahydrofolate interconversion. This Methylorubrum extorquens (strain ATCC 14718 / DSM 1338 / JCM 2805 / NCIMB 9133 / AM1) (Methylobacterium extorquens) protein is Formate--tetrahydrofolate ligase (fhs).